We begin with the raw amino-acid sequence, 312 residues long: HTH-type transcriptional regulator TdcA (312 aa).

The 58-residue stretch at 7–64 (PKTQHLVVFQEVIRSGSIGSAAKELGLTQPAVSKIINDIEDYFGVELVVRKNTGVTLT) folds into the HTH lysR-type domain. Residues 24–43 (IGSAAKELGLTQPAVSKIIN) constitute a DNA-binding region (H-T-H motif).

The protein belongs to the LysR transcriptional regulatory family.

The protein operates within amino-acid degradation; L-threonine degradation via propanoate pathway [regulation]. Functionally, transcriptional activator for the tdcABCDE operon. In Escherichia coli O157:H7, this protein is HTH-type transcriptional regulator TdcA (tdcA).